Consider the following 198-residue polypeptide: tRNA (cytidine(56)-2'-O)-methyltransferase (198 aa).

Residues leucine 81, 110–114, and 128–135 each bind S-adenosyl-L-methionine; these read GAEKV and IGNQPHSE. Positions 178-198 are disordered; sequence DAKQAEASGEGASRKNGQLPS.

This sequence belongs to the aTrm56 family. In terms of assembly, homodimer.

It is found in the cytoplasm. The catalysed reaction is cytidine(56) in tRNA + S-adenosyl-L-methionine = 2'-O-methylcytidine(56) in tRNA + S-adenosyl-L-homocysteine + H(+). Its function is as follows. Specifically catalyzes the AdoMet-dependent 2'-O-ribose methylation of cytidine at position 56 in tRNAs. The sequence is that of tRNA (cytidine(56)-2'-O)-methyltransferase from Pyrococcus abyssi (strain GE5 / Orsay).